Consider the following 798-residue polypeptide: Cation channel sperm-associated auxiliary subunit delta (798 aa).

An N-terminal signal peptide occupies residues 1-20 (MLMLMLVAAVTMWLRPLVTA). Topologically, residues 21–723 (QLCRSRTVRT…AFPVQLVSAG (703 aa)) are extracellular. Cystine bridges form between cysteine 23-cysteine 369, cysteine 59-cysteine 145, cysteine 144-cysteine 152, cysteine 387-cysteine 496, cysteine 510-cysteine 701, cysteine 525-cysteine 572, and cysteine 624-cysteine 652. An N-linked (GlcNAc...) asparagine glycan is attached at asparagine 123. N-linked (GlcNAc...) asparagine glycosylation is found at asparagine 230, asparagine 240, asparagine 472, asparagine 538, and asparagine 630. Residues 724–745 (VVILLIISSILGSVWLAYKTPK) traverse the membrane as a helical segment. Residues 746–798 (LLRTARGRRIKKCATQLCRRCKTVCQFRASATARAGTEPPGRHRTPHGGRSDH) lie on the Cytoplasmic side of the membrane.

It belongs to the CATSPERD family. In terms of assembly, component of the CatSper complex or CatSpermasome composed of the core pore-forming members CATSPER1, CATSPER2, CATSPER3 and CATSPER4 as well as auxiliary members CATSPERB, CATSPERG, CATSPERD, CATSPERE, CATSPERZ, C2CD6/CATSPERT, TMEM249, TMEM262 and EFCAB9. HSPA1 may be an additional auxiliary complex member. The core complex members CATSPER1, CATSPER2, CATSPER3 and CATSPER4 form a heterotetrameric channel. The auxiliary CATSPERB, CATSPERG, CATSPERD and CATSPERE subunits form a pavilion-like structure over the pore which stabilizes the complex through interactions with CATSPER4, CATSPER3, CATSPER1 and CATSPER2 respectively. TMEM262/CATSPERH interacts with CATSPERB, further stabilizing the complex. C2CD6/CATSPERT interacts at least with CATSPERD and is required for targeting the CatSper complex in the flagellar membrane.

It localises to the cell projection. Its subcellular location is the cilium. It is found in the flagellum membrane. Auxiliary component of the CatSper complex, a complex involved in sperm cell hyperactivation. Sperm cell hyperactivation is needed for sperm motility which is essential late in the preparation of sperm for fertilization. Required for CATSPER1 stability before intraflagellar transport and/or incorporation of the CatSper complex channel into the flagellar membrane. This is Cation channel sperm-associated auxiliary subunit delta from Homo sapiens (Human).